The primary structure comprises 696 residues: Elongation factor G (696 aa).

The tr-type G domain maps to 10–290 (THFRNIGIAA…AVVDYLPSPL (281 aa)). Residues 19–26 (AHIDAGKT), 89–93 (DTPGH), and 143–146 (NKMD) each bind GTP.

It belongs to the TRAFAC class translation factor GTPase superfamily. Classic translation factor GTPase family. EF-G/EF-2 subfamily.

The protein resides in the cytoplasm. Catalyzes the GTP-dependent ribosomal translocation step during translation elongation. During this step, the ribosome changes from the pre-translocational (PRE) to the post-translocational (POST) state as the newly formed A-site-bound peptidyl-tRNA and P-site-bound deacylated tRNA move to the P and E sites, respectively. Catalyzes the coordinated movement of the two tRNA molecules, the mRNA and conformational changes in the ribosome. In Deinococcus geothermalis (strain DSM 11300 / CIP 105573 / AG-3a), this protein is Elongation factor G.